We begin with the raw amino-acid sequence, 180 residues long: NAD(P)H-quinone oxidoreductase subunit I, chloroplastic (180 aa).

4Fe-4S ferredoxin-type domains follow at residues 55–84 (GRIHFEFDKCIACEVCVRVCPIDLPVVDWK) and 95–124 (LNYSIDFGICIFCGNCVEYCPTNCLSMTEE). [4Fe-4S] cluster contacts are provided by C64, C67, C70, C74, C104, C107, C110, and C114.

The protein belongs to the complex I 23 kDa subunit family. As to quaternary structure, NDH is composed of at least 16 different subunits, 5 of which are encoded in the nucleus. It depends on [4Fe-4S] cluster as a cofactor.

The protein localises to the plastid. The protein resides in the chloroplast thylakoid membrane. It catalyses the reaction a plastoquinone + NADH + (n+1) H(+)(in) = a plastoquinol + NAD(+) + n H(+)(out). The enzyme catalyses a plastoquinone + NADPH + (n+1) H(+)(in) = a plastoquinol + NADP(+) + n H(+)(out). In terms of biological role, NDH shuttles electrons from NAD(P)H:plastoquinone, via FMN and iron-sulfur (Fe-S) centers, to quinones in the photosynthetic chain and possibly in a chloroplast respiratory chain. The immediate electron acceptor for the enzyme in this species is believed to be plastoquinone. Couples the redox reaction to proton translocation, and thus conserves the redox energy in a proton gradient. This Ranunculus macranthus (Large buttercup) protein is NAD(P)H-quinone oxidoreductase subunit I, chloroplastic.